The primary structure comprises 275 residues: Polyamine aminopropyltransferase (275 aa).

One can recognise a PABS domain in the interval 2–235 (ELWFTEKQTK…GLWTFTIGSK (234 aa)). Residue glutamine 31 coordinates S-methyl-5'-thioadenosine. Spermidine contacts are provided by histidine 62 and aspartate 86. Residues glutamate 106 and 137 to 138 (DG) contribute to the S-methyl-5'-thioadenosine site. Residue aspartate 155 is the Proton acceptor of the active site. A spermidine-binding site is contributed by 155-158 (DSTE). Proline 162 is a binding site for S-methyl-5'-thioadenosine.

The protein belongs to the spermidine/spermine synthase family. As to quaternary structure, homodimer or homotetramer.

The protein localises to the cytoplasm. It catalyses the reaction S-adenosyl 3-(methylsulfanyl)propylamine + putrescine = S-methyl-5'-thioadenosine + spermidine + H(+). The protein operates within amine and polyamine biosynthesis; spermidine biosynthesis; spermidine from putrescine: step 1/1. Catalyzes the irreversible transfer of a propylamine group from the amino donor S-adenosylmethioninamine (decarboxy-AdoMet) to putrescine (1,4-diaminobutane) to yield spermidine. The protein is Polyamine aminopropyltransferase of Bacillus mycoides (strain KBAB4) (Bacillus weihenstephanensis).